Here is a 510-residue protein sequence, read N- to C-terminus: MIWHVQNENFILDSTRIFMKAFHLLLFDGSFIFPECILIFGLILLLIIDSTSDQKDIPWLYFISSTSLVMSITTLLFRWREEPMISFSGNFQTNNFNEIFQFLILLCSTLCIPLSVEYIECTEMALTEFLLFVLTATLGGMFLCGANDLITIFVAPECFSLCSYLLSGYTKKDVRSNEATTKYLLMGGTSSSILVHGFSWLYGSSGGEIELQEIVNGLINTQMYNSPGISIALIFITVGIGFKLSPAPSHQWTPDVYEGSPTPVVAFLSVTSKVAASASATRIFDIPFYFSSNEWHLLLEILAILSMILGNLIAITQTSMKRMLAYSSIGQIGYVIIGIIVGDSNDGYASMITYMLFYISMNLGTFACIVLFGLRTGTDNIRDYAGLYTKDPFLALSLALCLLSLGGLPPLAGFFGKLYLFWCGWQAGLYLLVLIGLLTSVLSIYYYLKIIKLLMTGRNQEITPHVRNYRRSPLRSKNSIELSMIVCVIASTIPGISMNPIIAIAQDTLF.

Helical transmembrane passes span 28–48, 57–77, 99–119, 124–144, 149–169, 183–203, 227–247, 295–315, 323–343, 354–374, 395–415, 418–438, and 484–504; these read DGSF…LLII, IPWL…TLLF, IFQF…VEYI, MALT…MFLC, LITI…LSGY, YLLM…WLYG, PGIS…LSPA, WHLL…LIAI, MLAY…IVGD, YMLF…LFGL, ALSL…AGFF, LYLF…IGLL, and MIVC…IIAI.

It belongs to the complex I subunit 2 family. As to quaternary structure, NDH is composed of at least 16 different subunits, 5 of which are encoded in the nucleus.

The protein resides in the plastid. Its subcellular location is the chloroplast thylakoid membrane. The catalysed reaction is a plastoquinone + NADH + (n+1) H(+)(in) = a plastoquinol + NAD(+) + n H(+)(out). The enzyme catalyses a plastoquinone + NADPH + (n+1) H(+)(in) = a plastoquinol + NADP(+) + n H(+)(out). NDH shuttles electrons from NAD(P)H:plastoquinone, via FMN and iron-sulfur (Fe-S) centers, to quinones in the photosynthetic chain and possibly in a chloroplast respiratory chain. The immediate electron acceptor for the enzyme in this species is believed to be plastoquinone. Couples the redox reaction to proton translocation, and thus conserves the redox energy in a proton gradient. The polypeptide is NAD(P)H-quinone oxidoreductase subunit 2, chloroplastic (Silene latifolia (White campion)).